The chain runs to 511 residues: Maturase K (511 aa).

Belongs to the intron maturase 2 family. MatK subfamily.

The protein resides in the plastid. It is found in the chloroplast. In terms of biological role, usually encoded in the trnK tRNA gene intron. Probably assists in splicing its own and other chloroplast group II introns. This is Maturase K from Mandragora officinarum (Mandrake).